The primary structure comprises 365 residues: Cobalt-precorrin-5B C(1)-methyltransferase (365 aa).

Belongs to the CbiD family.

It catalyses the reaction Co-precorrin-5B + S-adenosyl-L-methionine = Co-precorrin-6A + S-adenosyl-L-homocysteine. It functions in the pathway cofactor biosynthesis; adenosylcobalamin biosynthesis; cob(II)yrinate a,c-diamide from sirohydrochlorin (anaerobic route): step 6/10. In terms of biological role, catalyzes the methylation of C-1 in cobalt-precorrin-5B to form cobalt-precorrin-6A. The chain is Cobalt-precorrin-5B C(1)-methyltransferase from Clostridium perfringens (strain ATCC 13124 / DSM 756 / JCM 1290 / NCIMB 6125 / NCTC 8237 / Type A).